A 159-amino-acid chain; its full sequence is 2-C-methyl-D-erythritol 2,4-cyclodiphosphate synthase (159 aa).

Aspartate 8 and histidine 10 together coordinate a divalent metal cation. Residues 8–10 (DVH) and 34–35 (HS) each bind 4-CDP-2-C-methyl-D-erythritol 2-phosphate. Histidine 42 provides a ligand contact to a divalent metal cation. 4-CDP-2-C-methyl-D-erythritol 2-phosphate is bound by residues 56-58 (DIG), 61-65 (FPDTD), 100-106 (AQAPKML), 132-135 (TTTE), phenylalanine 139, and arginine 142.

The protein belongs to the IspF family. In terms of assembly, homotrimer. A divalent metal cation is required as a cofactor.

The catalysed reaction is 4-CDP-2-C-methyl-D-erythritol 2-phosphate = 2-C-methyl-D-erythritol 2,4-cyclic diphosphate + CMP. The protein operates within isoprenoid biosynthesis; isopentenyl diphosphate biosynthesis via DXP pathway; isopentenyl diphosphate from 1-deoxy-D-xylulose 5-phosphate: step 4/6. Functionally, involved in the biosynthesis of isopentenyl diphosphate (IPP) and dimethylallyl diphosphate (DMAPP), two major building blocks of isoprenoid compounds. Catalyzes the conversion of 4-diphosphocytidyl-2-C-methyl-D-erythritol 2-phosphate (CDP-ME2P) to 2-C-methyl-D-erythritol 2,4-cyclodiphosphate (ME-CPP) with a corresponding release of cytidine 5-monophosphate (CMP). The sequence is that of 2-C-methyl-D-erythritol 2,4-cyclodiphosphate synthase from Citrobacter koseri (strain ATCC BAA-895 / CDC 4225-83 / SGSC4696).